A 114-amino-acid chain; its full sequence is Probable acid stress chaperone HdeA (114 aa).

An N-terminal signal peptide occupies residues 1–26 (MIKTLFNKNTALAAVAILALSGSAMA). Cys-46 and Cys-94 form a disulfide bridge.

Belongs to the HdeA family.

The protein localises to the periplasm. In terms of biological role, required for optimal acid stress protection. Exhibits a chaperone-like activity only at low pH by suppressing non-specifically the aggregation of denaturated periplasmic proteins. The chain is Probable acid stress chaperone HdeA from Brucella ovis (strain ATCC 25840 / 63/290 / NCTC 10512).